Here is a 382-residue protein sequence, read N- to C-terminus: Per os infectivity factor 2 (382 aa).

In terms of assembly, forms the PIF complex together with PIF1 and PIF3. The complex also interacts with per os infectivity factor PIF0.

Functionally, per os infectivity factor that mediates the specific binding of occluded virions (ODV) to the host midgut target cells. This is Per os infectivity factor 2 from Autographa californica nuclear polyhedrosis virus (AcMNPV).